We begin with the raw amino-acid sequence, 195 residues long: dITP/XTP pyrophosphatase (195 aa).

A substrate-binding site is contributed by 8–13; that stretch reads SNNQGK. Mg(2+)-binding residues include Glu-39 and Asp-68. Catalysis depends on Asp-68, which acts as the Proton acceptor. Substrate-binding positions include Ser-69, 149 to 152, Lys-172, and 177 to 178; these read FGYD and HR.

It belongs to the HAM1 NTPase family. As to quaternary structure, homodimer. Requires Mg(2+) as cofactor.

It carries out the reaction XTP + H2O = XMP + diphosphate + H(+). The enzyme catalyses dITP + H2O = dIMP + diphosphate + H(+). It catalyses the reaction ITP + H2O = IMP + diphosphate + H(+). Functionally, pyrophosphatase that catalyzes the hydrolysis of nucleoside triphosphates to their monophosphate derivatives, with a high preference for the non-canonical purine nucleotides XTP (xanthosine triphosphate), dITP (deoxyinosine triphosphate) and ITP. Seems to function as a house-cleaning enzyme that removes non-canonical purine nucleotides from the nucleotide pool, thus preventing their incorporation into DNA/RNA and avoiding chromosomal lesions. The chain is dITP/XTP pyrophosphatase from Staphylococcus aureus (strain Mu50 / ATCC 700699).